Consider the following 174-residue polypeptide: ATP-dependent protease subunit HslV (174 aa).

The active site involves threonine 2. Residues glycine 157, cysteine 160, and threonine 163 each contribute to the Na(+) site.

Belongs to the peptidase T1B family. HslV subfamily. A double ring-shaped homohexamer of HslV is capped on each side by a ring-shaped HslU homohexamer. The assembly of the HslU/HslV complex is dependent on binding of ATP.

The protein resides in the cytoplasm. The catalysed reaction is ATP-dependent cleavage of peptide bonds with broad specificity.. Its activity is regulated as follows. Allosterically activated by HslU binding. Protease subunit of a proteasome-like degradation complex believed to be a general protein degrading machinery. In Shewanella halifaxensis (strain HAW-EB4), this protein is ATP-dependent protease subunit HslV.